The primary structure comprises 429 residues: Enolase (429 aa).

A (2R)-2-phosphoglycerate-binding site is contributed by Gln-168. Glu-210 acts as the Proton donor in catalysis. Mg(2+) contacts are provided by Asp-247, Glu-288, and Asp-315. Residues Lys-340, Arg-369, Ser-370, and Lys-391 each coordinate (2R)-2-phosphoglycerate. Lys-340 acts as the Proton acceptor in catalysis.

This sequence belongs to the enolase family. The cofactor is Mg(2+).

The protein localises to the cytoplasm. It is found in the secreted. Its subcellular location is the cell surface. It catalyses the reaction (2R)-2-phosphoglycerate = phosphoenolpyruvate + H2O. It functions in the pathway carbohydrate degradation; glycolysis; pyruvate from D-glyceraldehyde 3-phosphate: step 4/5. Its function is as follows. Catalyzes the reversible conversion of 2-phosphoglycerate (2-PG) into phosphoenolpyruvate (PEP). It is essential for the degradation of carbohydrates via glycolysis. The protein is Enolase of Trichormus variabilis (strain ATCC 29413 / PCC 7937) (Anabaena variabilis).